We begin with the raw amino-acid sequence, 361 residues long: Thymidine kinase (361 aa).

Position 17–24 (17–24 (GPHGVGKS)) interacts with ATP. Catalysis depends on Glu46, which acts as the Proton acceptor. Residues Tyr64 and Gln88 each contribute to the substrate site. Arg184 is a binding site for ATP. A substrate-binding site is contributed by Arg190.

It belongs to the herpesviridae thymidine kinase family. In terms of assembly, homodimer.

It carries out the reaction thymidine + ATP = dTMP + ADP + H(+). Catalyzes the transfer of the gamma-phospho group of ATP to thymidine to generate dTMP in the salvage pathway of pyrimidine synthesis. The dTMP serves as a substrate for DNA polymerase during viral DNA replication. Allows the virus to be reactivated and to grow in non-proliferative cells lacking a high concentration of phosphorylated nucleic acid precursors. The sequence is that of Thymidine kinase from Saimiriine herpesvirus 1 (strain MV-5-4-PSL) (SaHV-1).